The sequence spans 110 residues: Insulin (110 aa).

Positions 1–24 (MALWTRLLPLLALLALLGPDPAQA) are cleaved as a signal peptide. Disulfide bonds link Cys31/Cys96, Cys43/Cys109, and Cys95/Cys100. Positions 57-87 (EVEEQQGGQVELGGGPGAGLPQPLALEMALQ) are cleaved as a propeptide — c peptide.

It belongs to the insulin family. In terms of assembly, heterodimer of a B chain and an A chain linked by two disulfide bonds.

The protein resides in the secreted. In terms of biological role, insulin decreases blood glucose concentration. It increases cell permeability to monosaccharides, amino acids and fatty acids. It accelerates glycolysis, the pentose phosphate cycle, and glycogen synthesis in liver. The sequence is that of Insulin (INS) from Ictidomys tridecemlineatus (Thirteen-lined ground squirrel).